Here is a 160-residue protein sequence, read N- to C-terminus: Large ribosomal subunit protein uL15 (160 aa).

The span at 1–13 (MKLNELRDNEGAA) shows a compositional bias: basic and acidic residues. The interval 1–51 (MKLNELRDNEGAARKKKRVARGPGSGKGKTAGRGIKGQKSRSGVALNGYEG) is disordered. Residues 23–35 (PGSGKGKTAGRGI) show a composition bias toward gly residues.

Belongs to the universal ribosomal protein uL15 family. As to quaternary structure, part of the 50S ribosomal subunit.

Binds to the 23S rRNA. This chain is Large ribosomal subunit protein uL15, found in Cereibacter sphaeroides (strain ATCC 17025 / ATH 2.4.3) (Rhodobacter sphaeroides).